The following is a 293-amino-acid chain: Elongation factor Ts (293 aa).

The segment at 80–83 (TDFV) is involved in Mg(2+) ion dislocation from EF-Tu.

It belongs to the EF-Ts family.

Its subcellular location is the cytoplasm. Its function is as follows. Associates with the EF-Tu.GDP complex and induces the exchange of GDP to GTP. It remains bound to the aminoacyl-tRNA.EF-Tu.GTP complex up to the GTP hydrolysis stage on the ribosome. This is Elongation factor Ts from Staphylococcus aureus (strain Mu3 / ATCC 700698).